The sequence spans 636 residues: ABC transporter ATP-binding protein RamA (636 aa).

The next 5 membrane-spanning stretches (helical) occupy residues 45–65 (VLVL…PLAL), 78–98 (AGWW…LDSA), 175–195 (LVDV…ALLL), 269–289 (GVLV…RLAA), and 297–317 (LLAV…ASLL). The ABC transmembrane type-1 domain occupies 45-322 (VLVLLCSVAA…AASLLGAIVR (278 aa)). The ABC transporter domain occupies 354-585 (LRLCGVRVLR…AGYREVFGAG (232 aa)). 386 to 393 (GRSGAGKS) lines the ATP pocket. Positions 589–606 (GAGAGAGAGADAGAGADA) are enriched in gly residues. A disordered region spans residues 589 to 636 (GAGAGAGAGADAGAGADAGPGPDSGAATAVGGSGPGPVRRPEPEEARP). A compositionally biased stretch (low complexity) spans 607–618 (GPGPDSGAATAV). Basic and acidic residues predominate over residues 627 to 636 (RRPEPEEARP).

It belongs to the ABC transporter superfamily.

It localises to the cell membrane. Functionally, probably involved in exporting SapB from the cell. Expression of the ram locus (ramA, ramB and ramR) induces rapid aerial mycelium formation in S.lividans. This is ABC transporter ATP-binding protein RamA from Streptomyces coelicolor (strain ATCC BAA-471 / A3(2) / M145).